The primary structure comprises 467 residues: MDTILAGGSGTSDASDNTCTICMSTVSDLGKTMPCLHDFCFVCIRAWTSTSVQCPLCRCPVQSILHKIVSDTSYKEYEVHPSDDDGFSEPSFEDSIDILPGDVIDLLPPSPGPSRESIQQPTSRSSREPIQSPNPGPLQSSAREPTAESPSDSQQDSIQPPTRDSSPGVTKTCSTASFLRKVFFKDQPAVRSATPVVYGSIESAQQPRTGGQDYRDRPVSVGINQDPRTMDRLPFRATDRGTEGNARFPCYMQPLLGWLDDQLAELYQPEIVEPTKMLILNYIGIYGRDEAGLKTSLRCLLHDSTGPFVTNMLFLLDRCTDPTRLTMQTWTWKDTAIQLITGPIVRPETTSTGETSRGDERDTRLVNTPQKVRLFSVLPGIKPGSARGAKRRLFHTGRDVKRCLTIDLTSESDSACKGSKTRKVASPQGESNTPSTSGSTSGSLKHLTKKSSAGKAGKGIPNKMKKS.

The segment at 19–58 (CTICMSTVSDLGKTMPCLHDFCFVCIRAWTSTSVQCPLCR) adopts an RING-type zinc-finger fold. Disordered stretches follow at residues 101–171 (GDVI…GVTK), 205–238 (QQPR…FRAT), 344–364 (IVRP…RDTR), and 413–467 (DSAC…MKKS). Residues 116–143 (ESIQQPTSRSSREPIQSPNPGPLQSSAR) show a composition bias toward polar residues. Residues 149 to 161 (SPSDSQQDSIQPP) are compositionally biased toward low complexity. Residues 162–171 (TRDSSPGVTK) show a composition bias toward polar residues. The span at 228 to 238 (RTMDRLPFRAT) shows a compositional bias: basic and acidic residues. 2 stretches are compositionally biased toward low complexity: residues 429–443 (GESN…TSGS) and 450–459 (KSSAGKAGKG).

Interacts with host BTRC; this interaction seems to inactivate SCF-mediated protein degradation in general. Post-translationally, auto-ubiquitinated.

The enzyme catalyses S-ubiquitinyl-[E2 ubiquitin-conjugating enzyme]-L-cysteine + [acceptor protein]-L-lysine = [E2 ubiquitin-conjugating enzyme]-L-cysteine + N(6)-ubiquitinyl-[acceptor protein]-L-lysine.. RING-finger E3 ubiquitin ligase that degrades host SP100, one of the major components of ND10 nuclear bodies, thereby disrupting the organization of these bodies. Also plays a role in the inhibition of host NF-kappa-B pathway by blocking the SCF(BTRC)-mediated addition of ubiquitin chains to host I-kappa-B-alpha/NFKBIA, thereby interfering with its degradation. In Varicella-zoster virus (strain Dumas) (HHV-3), this protein is E3 ubiquitin-protein ligase IE61 (61).